The sequence spans 353 residues: UDP-N-acetylglucosamine--N-acetylmuramyl-(pentapeptide) pyrophosphoryl-undecaprenol N-acetylglucosamine transferase (353 aa).

Residues 15-17 (TGG), asparagine 125, arginine 165, serine 186, and glutamine 286 each bind UDP-N-acetyl-alpha-D-glucosamine.

The protein belongs to the glycosyltransferase 28 family. MurG subfamily.

Its subcellular location is the cell inner membrane. It carries out the reaction di-trans,octa-cis-undecaprenyl diphospho-N-acetyl-alpha-D-muramoyl-L-alanyl-D-glutamyl-meso-2,6-diaminopimeloyl-D-alanyl-D-alanine + UDP-N-acetyl-alpha-D-glucosamine = di-trans,octa-cis-undecaprenyl diphospho-[N-acetyl-alpha-D-glucosaminyl-(1-&gt;4)]-N-acetyl-alpha-D-muramoyl-L-alanyl-D-glutamyl-meso-2,6-diaminopimeloyl-D-alanyl-D-alanine + UDP + H(+). The protein operates within cell wall biogenesis; peptidoglycan biosynthesis. In terms of biological role, cell wall formation. Catalyzes the transfer of a GlcNAc subunit on undecaprenyl-pyrophosphoryl-MurNAc-pentapeptide (lipid intermediate I) to form undecaprenyl-pyrophosphoryl-MurNAc-(pentapeptide)GlcNAc (lipid intermediate II). The chain is UDP-N-acetylglucosamine--N-acetylmuramyl-(pentapeptide) pyrophosphoryl-undecaprenol N-acetylglucosamine transferase from Chlamydia muridarum (strain MoPn / Nigg).